We begin with the raw amino-acid sequence, 192 residues long: 7-methyl-GTP pyrophosphatase (192 aa).

Residue D69 is the Proton acceptor of the active site.

Belongs to the Maf family. YceF subfamily. It depends on a divalent metal cation as a cofactor.

It is found in the cytoplasm. It carries out the reaction N(7)-methyl-GTP + H2O = N(7)-methyl-GMP + diphosphate + H(+). In terms of biological role, nucleoside triphosphate pyrophosphatase that hydrolyzes 7-methyl-GTP (m(7)GTP). May have a dual role in cell division arrest and in preventing the incorporation of modified nucleotides into cellular nucleic acids. The chain is 7-methyl-GTP pyrophosphatase (maf-1) from Pseudomonas syringae pv. tomato (strain ATCC BAA-871 / DC3000).